Here is a 341-residue protein sequence, read N- to C-terminus: 1-aminocyclopropane-1-carboxylate deaminase (341 aa).

Residue serine 1 is modified to N-acetylserine. Lysine 51 bears the N6-(pyridoxal phosphate)lysine mark. Residue serine 78 is the Nucleophile of the active site.

It belongs to the ACC deaminase/D-cysteine desulfhydrase family. Homodimer. Pyridoxal 5'-phosphate is required as a cofactor.

It catalyses the reaction 1-aminocyclopropane-1-carboxylate + H2O = 2-oxobutanoate + NH4(+). Catalyzes a cyclopropane ring-opening reaction, the irreversible conversion of 1-aminocyclopropane-1-carboxylate (ACC) to ammonia and alpha-ketobutyrate. This chain is 1-aminocyclopropane-1-carboxylate deaminase, found in Cyberlindnera saturnus (Yeast).